Consider the following 312-residue polypeptide: Malate dehydrogenase (312 aa).

Residues 7–13 and Asp-34 each bind NAD(+); that span reads GAAGGIG. Residues Arg-81 and Arg-87 each coordinate substrate. Residues Asn-94 and 117-119 contribute to the NAD(+) site; that span reads ITN. Substrate is bound by residues Asn-119 and Arg-153. Residue His-177 is the Proton acceptor of the active site. An NAD(+)-binding site is contributed by Met-227.

Belongs to the LDH/MDH superfamily. MDH type 1 family. Homodimer.

It carries out the reaction (S)-malate + NAD(+) = oxaloacetate + NADH + H(+). Catalyzes the reversible oxidation of malate to oxaloacetate. The chain is Malate dehydrogenase from Pectobacterium carotovorum subsp. carotovorum (strain PC1).